Here is a 601-residue protein sequence, read N- to C-terminus: Elongation factor 4 (601 aa).

Positions 6–188 (QFIRNFSIIA…AITKEIPAPK (183 aa)) constitute a tr-type G domain. GTP-binding positions include 18–23 (DHGKST) and 135–138 (NKID).

Belongs to the TRAFAC class translation factor GTPase superfamily. Classic translation factor GTPase family. LepA subfamily.

Its subcellular location is the cell inner membrane. The enzyme catalyses GTP + H2O = GDP + phosphate + H(+). Functionally, required for accurate and efficient protein synthesis under certain stress conditions. May act as a fidelity factor of the translation reaction, by catalyzing a one-codon backward translocation of tRNAs on improperly translocated ribosomes. Back-translocation proceeds from a post-translocation (POST) complex to a pre-translocation (PRE) complex, thus giving elongation factor G a second chance to translocate the tRNAs correctly. Binds to ribosomes in a GTP-dependent manner. The polypeptide is Elongation factor 4 (Leptospira borgpetersenii serovar Hardjo-bovis (strain JB197)).